Consider the following 87-residue polypeptide: UPF0248 protein TON_0940 (87 aa).

This sequence belongs to the UPF0248 family.

This Thermococcus onnurineus (strain NA1) protein is UPF0248 protein TON_0940.